A 336-amino-acid chain; its full sequence is GTPase Obg (336 aa).

Residues 1–159 form the Obg domain; the sequence is MKFVDSATVF…LELAMELKLM (159 aa). The tract at residues 120-143 is disordered; the sequence is GGHGGRGNQHFATSTNQAPRRSEP. Polar residues predominate over residues 129 to 138; that stretch reads HFATSTNQAP. Residues 160 to 323 form the OBG-type G domain; sequence ADVGLVGFPN…LKDELWRQVS (164 aa). GTP contacts are provided by residues 166-173, 191-195, 213-216, 280-283, and 304-306; these read GFPNAGKS, FTTLV, DIPG, TKMD, and SSV. Residues Ser-173 and Thr-193 each coordinate Mg(2+).

Belongs to the TRAFAC class OBG-HflX-like GTPase superfamily. OBG GTPase family. Monomer. The cofactor is Mg(2+).

It localises to the cytoplasm. In terms of biological role, an essential GTPase which binds GTP, GDP and possibly (p)ppGpp with moderate affinity, with high nucleotide exchange rates and a fairly low GTP hydrolysis rate. Plays a role in control of the cell cycle, stress response, ribosome biogenesis and in those bacteria that undergo differentiation, in morphogenesis control. The chain is GTPase Obg from Chlorobium phaeovibrioides (strain DSM 265 / 1930) (Prosthecochloris vibrioformis (strain DSM 265)).